Reading from the N-terminus, the 139-residue chain is Large ribosomal subunit protein uL16 (139 aa).

Positions 1 to 17 are enriched in basic residues; sequence MLMPKRVKYRKSQRGRM. Residues 1–24 form a disordered region; that stretch reads MLMPKRVKYRKSQRGRMKGNSGRG.

The protein belongs to the universal ribosomal protein uL16 family. In terms of assembly, part of the 50S ribosomal subunit.

In terms of biological role, binds 23S rRNA and is also seen to make contacts with the A and possibly P site tRNAs. In Chlorobium limicola (strain DSM 245 / NBRC 103803 / 6330), this protein is Large ribosomal subunit protein uL16.